The chain runs to 452 residues: UDP-N-acetylmuramoylalanine--D-glutamate ligase (452 aa).

An ATP-binding site is contributed by 119–125; that stretch reads GSNGKTT.

It belongs to the MurCDEF family.

Its subcellular location is the cytoplasm. It carries out the reaction UDP-N-acetyl-alpha-D-muramoyl-L-alanine + D-glutamate + ATP = UDP-N-acetyl-alpha-D-muramoyl-L-alanyl-D-glutamate + ADP + phosphate + H(+). It functions in the pathway cell wall biogenesis; peptidoglycan biosynthesis. Cell wall formation. Catalyzes the addition of glutamate to the nucleotide precursor UDP-N-acetylmuramoyl-L-alanine (UMA). The chain is UDP-N-acetylmuramoylalanine--D-glutamate ligase from Streptococcus pyogenes serotype M5 (strain Manfredo).